The sequence spans 374 residues: uncharacterized protein (374 aa).

A divalent metal cation is bound by residues Asp-158, His-160, Asp-190, Asn-221, His-312, and His-314.

The protein belongs to the metallophosphoesterase superfamily. A divalent metal cation is required as a cofactor.

This is an uncharacterized protein from Campylobacter jejuni subsp. jejuni serotype O:2 (strain ATCC 700819 / NCTC 11168).